The chain runs to 24 residues: Snake venom metalloproteinase Batx-1 (24 aa).

Residues 1 to 24 (YIELAVVADHGIFTKYNSNLNTIR) form the Peptidase M12B domain. Residue Glu3 coordinates Ca(2+).

It belongs to the venom metalloproteinase (M12B) family. P-I subfamily. In terms of assembly, monomer. Requires Zn(2+) as cofactor. The N-terminus is blocked. In terms of processing, contains 3 disulfide bonds. In terms of tissue distribution, expressed by the venom gland.

Its subcellular location is the secreted. Its activity is regulated as follows. Inhibited by EDTA, and o-phenanthroline, but not inhibited by PMSF, pepstatin A, and aprotinin. Functionally, zinc metalloproteinase that exhits a weak hemorrhagic activity. Degrades preferentially the Aalpha- (FGA) and Bbeta-chains (FGB) of fibrinogen, and partially degrades gamma-chain (FGG) at higher concentration. Induces a mild myotoxicity, but lacks coagulant activity on human plasma or bovin fibrinogen and defibrinating activity. The chain is Snake venom metalloproteinase Batx-1 from Bothrops atrox (Barba amarilla).